Reading from the N-terminus, the 346-residue chain is Dihydroorotase (346 aa).

The Zn(2+) site is built by histidine 14 and histidine 16. Substrate contacts are provided by residues 16–18 (HLR) and asparagine 42. Residues lysine 100, histidine 137, and histidine 175 each coordinate Zn(2+). Residue lysine 100 is modified to N6-carboxylysine. Histidine 137 is a binding site for substrate. Leucine 220 contacts substrate. Residue aspartate 248 participates in Zn(2+) binding. Aspartate 248 is an active-site residue. Substrate-binding residues include histidine 252 and alanine 264.

It belongs to the metallo-dependent hydrolases superfamily. DHOase family. Class II DHOase subfamily. In terms of assembly, homodimer. Zn(2+) is required as a cofactor.

The enzyme catalyses (S)-dihydroorotate + H2O = N-carbamoyl-L-aspartate + H(+). It participates in pyrimidine metabolism; UMP biosynthesis via de novo pathway; (S)-dihydroorotate from bicarbonate: step 3/3. Catalyzes the reversible cyclization of carbamoyl aspartate to dihydroorotate. The polypeptide is Dihydroorotase (Cereibacter sphaeroides (strain ATCC 17025 / ATH 2.4.3) (Rhodobacter sphaeroides)).